We begin with the raw amino-acid sequence, 387 residues long: F-box protein DOR (387 aa).

In terms of domain architecture, F-box spans 19–64 (DENFEPIPIDLVIEIFSRSPVKSIARCRCVSKLWASILRLPYFTEL).

In terms of assembly, part of a SCF (ASK-cullin-F-box) protein ligase complex. Interacts with ASK14 and CUL1. In terms of tissue distribution, strongly expressed in guard cells. Mostly represented in seedlings, leaves and flowers, and, to a lower extent, in roots and siliques.

Its pathway is protein modification; protein ubiquitination. In terms of biological role, component of SCF(ASK-cullin-F-box) E3 ubiquitin ligase complexes, which may mediate the ubiquitination and subsequent proteasomal degradation of target proteins. Negative regulator of guard cell abscisic acid (ABA) signaling, especially during drought stress. In Arabidopsis thaliana (Mouse-ear cress), this protein is F-box protein DOR (DOR).